The following is a 231-amino-acid chain: Octanoyltransferase (231 aa).

The BPL/LPL catalytic domain maps to 49–231; the sequence is SEAAEQVWLL…KRTFSEVFGS (183 aa). Residues 87–94, 162–164, and 175–177 contribute to the substrate site; these read RGGQITYH, AIG, and GVS. Cys193 serves as the catalytic Acyl-thioester intermediate.

It belongs to the LipB family.

The protein resides in the cytoplasm. The catalysed reaction is octanoyl-[ACP] + L-lysyl-[protein] = N(6)-octanoyl-L-lysyl-[protein] + holo-[ACP] + H(+). It functions in the pathway protein modification; protein lipoylation via endogenous pathway; protein N(6)-(lipoyl)lysine from octanoyl-[acyl-carrier-protein]: step 1/2. In terms of biological role, catalyzes the transfer of endogenously produced octanoic acid from octanoyl-acyl-carrier-protein onto the lipoyl domains of lipoate-dependent enzymes. Lipoyl-ACP can also act as a substrate although octanoyl-ACP is likely to be the physiological substrate. The polypeptide is Octanoyltransferase (Nitrobacter winogradskyi (strain ATCC 25391 / DSM 10237 / CIP 104748 / NCIMB 11846 / Nb-255)).